The primary structure comprises 220 residues: Iron-sulfur cluster repair protein YtfE (220 aa).

The protein belongs to the RIC family. YtfE subfamily. Homodimer.

It is found in the cytoplasm. Functionally, di-iron-containing protein involved in the repair of iron-sulfur clusters damaged by oxidative and nitrosative stress conditions. This Shigella boydii serotype 4 (strain Sb227) protein is Iron-sulfur cluster repair protein YtfE.